The following is a 165-amino-acid chain: Putative defense protein Hdd11 (165 aa).

Positions 1–17 (MWATYVFIAVSLACANG) are cleaved as a signal peptide. The Reelin domain maps to 18–165 (YSSGAPESVC…VESGPVKVIS (148 aa)). Cys-27 and Cys-104 are oxidised to a cystine.

The protein belongs to the insect defense protein family.

The protein resides in the secreted. Functionally, as this protein is expressed upon bacterial infection, it may have antimicrobial activity. In Hyphantria cunea (Fall webworm moth), this protein is Putative defense protein Hdd11.